The following is a 440-amino-acid chain: Adenylyltransferase and sulfurtransferase UBA4 (440 aa).

Position 1 is an N-acetylmethionine (Met-1). ATP contacts are provided by residues Gly-77, Asp-98, 105–109, Lys-122, and 166–167; these read SNLHR and DS. Residues Cys-208 and Cys-211 each coordinate Zn(2+). Cys-225 serves as the catalytic Glycyl thioester intermediate; for adenylyltransferase activity. Zn(2+) contacts are provided by Cys-286 and Cys-289. The residue at position 326 (Ser-326) is a Phosphoserine. A Rhodanese domain is found at 339–438; that stretch reads FLAKHIFLDV…YIDDIDQTIP (100 aa). Cys-397 acts as the Cysteine persulfide intermediate; for sulfurtransferase activity in catalysis.

The protein in the N-terminal section; belongs to the HesA/MoeB/ThiF family. UBA4 subfamily. It depends on Zn(2+) as a cofactor.

Its subcellular location is the cytoplasm. The protein localises to the cytosol. It participates in tRNA modification; 5-methoxycarbonylmethyl-2-thiouridine-tRNA biosynthesis. Plays a central role in 2-thiolation of mcm(5)S(2)U at tRNA wobble positions of cytosolic tRNA(Lys), tRNA(Glu) and tRNA(Gln). Acts by mediating the C-terminal thiocarboxylation of sulfur carrier URM1. Its N-terminus first activates URM1 as acyl-adenylate (-COAMP), then the persulfide sulfur on the catalytic cysteine is transferred to URM1 to form thiocarboxylation (-COSH) of its C-terminus. The reaction probably involves hydrogen sulfide that is generated from the persulfide intermediate and that acts as a nucleophile towards URM1. Subsequently, a transient disulfide bond is formed. Does not use thiosulfate as sulfur donor; NFS1 probably acting as a sulfur donor for thiocarboxylation reactions. Prior mcm(5) tRNA modification by the elongator complex is required for 2-thiolation. May also be involved in protein urmylation. The sequence is that of Adenylyltransferase and sulfurtransferase UBA4 from Saccharomyces cerevisiae (strain YJM789) (Baker's yeast).